The following is a 163-amino-acid chain: Odorant-binding protein 1a (163 aa).

Positions 1 to 16 (MAKFLLLALTFGLAHA) are cleaved as a signal peptide. Intrachain disulfides connect Cys50–Cys54 and Cys69–Cys161.

Belongs to the calycin superfamily. Lipocalin family. As to quaternary structure, may form a heterodimer with OBP1B. Post-translationally, the N-terminus may be blocked. As to expression, expressed in nasal mucosa (at protein level). Specifically detected in septal and lateral nasal glands.

Its subcellular location is the secreted. In terms of biological role, binds the chemical odorant 2-isobutyl-3-methoxypyrazine. In Mus musculus (Mouse), this protein is Odorant-binding protein 1a.